A 179-amino-acid polypeptide reads, in one-letter code: Probable inosine/xanthosine triphosphatase (179 aa).

A substrate-binding site is contributed by 13–18; it reads STNPVK. Q70 lines the Mg(2+) pocket.

It belongs to the YjjX NTPase family. As to quaternary structure, homodimer. Mg(2+) serves as cofactor. The cofactor is Mn(2+).

It catalyses the reaction XTP + H2O = XDP + phosphate + H(+). The enzyme catalyses ITP + H2O = IDP + phosphate + H(+). Its function is as follows. Phosphatase that hydrolyzes non-canonical purine nucleotides such as XTP and ITP to their respective diphosphate derivatives. Probably excludes non-canonical purines from DNA/RNA precursor pool, thus preventing their incorporation into DNA/RNA and avoiding chromosomal lesions. In Methanocaldococcus jannaschii (strain ATCC 43067 / DSM 2661 / JAL-1 / JCM 10045 / NBRC 100440) (Methanococcus jannaschii), this protein is Probable inosine/xanthosine triphosphatase.